We begin with the raw amino-acid sequence, 475 residues long: ATP synthase subunit beta, chloroplastic (475 aa).

155 to 162 (GGAGVGKT) is an ATP binding site.

Belongs to the ATPase alpha/beta chains family. As to quaternary structure, F-type ATPases have 2 components, CF(1) - the catalytic core - and CF(0) - the membrane proton channel. CF(1) has five subunits: alpha(3), beta(3), gamma(1), delta(1), epsilon(1). CF(0) has four main subunits: a(1), b(1), b'(1) and c(9-12).

It localises to the plastid. Its subcellular location is the chloroplast thylakoid membrane. It catalyses the reaction ATP + H2O + 4 H(+)(in) = ADP + phosphate + 5 H(+)(out). Functionally, produces ATP from ADP in the presence of a proton gradient across the membrane. The catalytic sites are hosted primarily by the beta subunits. The sequence is that of ATP synthase subunit beta, chloroplastic from Pyropia yezoensis (Susabi-nori).